The following is a 222-amino-acid chain: Peptidyl-prolyl cis-trans isomerase FKBP7 (222 aa).

Positions 1 to 23 (MPKTMHFLFRFIVFFYLWGLFTA) are cleaved as a signal peptide. The N-linked (GlcNAc...) asparagine glycan is linked to N45. Positions 53–145 (GDLLNAHYDG…IFEIELYAVT (93 aa)) constitute a PPIase FKBP-type domain. 2 EF-hand domains span residues 145 to 180 (TKGP…EFEK) and 189 to 222 (YQDA…HDEL). Positions 158, 160, 162, 164, 169, 202, 204, 206, and 213 each coordinate Ca(2+). Positions 219-222 (HDEL) match the Prevents secretion from ER motif.

Post-translationally, glycosylated.

Its subcellular location is the endoplasmic reticulum lumen. The enzyme catalyses [protein]-peptidylproline (omega=180) = [protein]-peptidylproline (omega=0). PPIases accelerate the folding of proteins during protein synthesis. The polypeptide is Peptidyl-prolyl cis-trans isomerase FKBP7 (FKBP7) (Pongo abelii (Sumatran orangutan)).